Consider the following 484-residue polypeptide: Antibiotic efflux pump outer membrane protein ArpC (484 aa).

The signal sequence occupies residues 1–17; sequence MTKSLLSLAVTAFILGG. The N-palmitoyl cysteine moiety is linked to residue cysteine 18. A lipid anchor (S-diacylglycerol cysteine) is attached at cysteine 18.

This sequence belongs to the outer membrane factor (OMF) (TC 1.B.17) family.

The protein localises to the cell outer membrane. Its function is as follows. The outer membrane component of an antibiotic efflux pump. Confers resistance to numerous structurally unrelated antibiotics such as carbenicillin, chloramphenicol, erythromycin, novobiocin, streptomycin and tetracycline. Is not involved in organic solvent efflux. The polypeptide is Antibiotic efflux pump outer membrane protein ArpC (arpC) (Pseudomonas putida (Arthrobacter siderocapsulatus)).